Here is a 427-residue protein sequence, read N- to C-terminus: Glutamyl-tRNA(Gln) amidotransferase subunit D (427 aa).

The Asparaginase/glutaminase domain occupies 74-407 (ERVYIIGAGG…EVVRKMFQRN (334 aa)). Active-site residues include Thr-84, Thr-160, Asp-161, and Lys-240.

It belongs to the asparaginase 1 family. GatD subfamily. Heterodimer of GatD and GatE.

It catalyses the reaction L-glutamyl-tRNA(Gln) + L-glutamine + ATP + H2O = L-glutaminyl-tRNA(Gln) + L-glutamate + ADP + phosphate + H(+). In terms of biological role, allows the formation of correctly charged Gln-tRNA(Gln) through the transamidation of misacylated Glu-tRNA(Gln) in organisms which lack glutaminyl-tRNA synthetase. The reaction takes place in the presence of glutamine and ATP through an activated gamma-phospho-Glu-tRNA(Gln). The GatDE system is specific for glutamate and does not act on aspartate. The protein is Glutamyl-tRNA(Gln) amidotransferase subunit D of Aeropyrum pernix (strain ATCC 700893 / DSM 11879 / JCM 9820 / NBRC 100138 / K1).